Reading from the N-terminus, the 193-residue chain is Probable type II restriction enzyme HpyAORF263P (193 aa).

The protein belongs to the BsaWI type II restriction endonuclease family.

It catalyses the reaction Endonucleolytic cleavage of DNA to give specific double-stranded fragments with terminal 5'-phosphates.. A P subtype probable restriction enzyme that recognizes the double-stranded sequence CCGG; the cleavage site is unknown. This is Probable type II restriction enzyme HpyAORF263P from Helicobacter pylori (strain ATCC 700392 / 26695) (Campylobacter pylori).